Reading from the N-terminus, the 629-residue chain is tRNA uridine 5-carboxymethylaminomethyl modification enzyme MnmG (629 aa).

An FAD-binding site is contributed by 13–18 (GGGHAG). Residue 273–287 (GPRYCPSIEDKINRF) coordinates NAD(+).

The protein belongs to the MnmG family. In terms of assembly, homodimer. Heterotetramer of two MnmE and two MnmG subunits. It depends on FAD as a cofactor.

It localises to the cytoplasm. Its function is as follows. NAD-binding protein involved in the addition of a carboxymethylaminomethyl (cmnm) group at the wobble position (U34) of certain tRNAs, forming tRNA-cmnm(5)s(2)U34. In Shewanella piezotolerans (strain WP3 / JCM 13877), this protein is tRNA uridine 5-carboxymethylaminomethyl modification enzyme MnmG.